The following is a 599-amino-acid chain: Elongation factor 4 (599 aa).

A tr-type G domain is found at 5–187 (SHIRNFSIIA…ELVRLVPPPT (183 aa)). Residues 17–22 (DHGKST) and 134–137 (NKMD) each bind GTP.

It belongs to the TRAFAC class translation factor GTPase superfamily. Classic translation factor GTPase family. LepA subfamily.

The protein localises to the cell inner membrane. The enzyme catalyses GTP + H2O = GDP + phosphate + H(+). In terms of biological role, required for accurate and efficient protein synthesis under certain stress conditions. May act as a fidelity factor of the translation reaction, by catalyzing a one-codon backward translocation of tRNAs on improperly translocated ribosomes. Back-translocation proceeds from a post-translocation (POST) complex to a pre-translocation (PRE) complex, thus giving elongation factor G a second chance to translocate the tRNAs correctly. Binds to ribosomes in a GTP-dependent manner. The polypeptide is Elongation factor 4 (Cellvibrio japonicus (strain Ueda107) (Pseudomonas fluorescens subsp. cellulosa)).